The primary structure comprises 129 residues: Follitropin subunit beta (129 aa).

An N-terminal signal peptide occupies residues Met1–Ser20. 6 disulfides stabilise this stretch: Cys21–Cys69, Cys35–Cys84, Cys38–Cys122, Cys46–Cys100, Cys50–Cys102, and Cys105–Cys112. Residues Asn25 and Asn42 are each glycosylated (N-linked (GlcNAc...) asparagine).

It belongs to the glycoprotein hormones subunit beta family. As to quaternary structure, heterodimer. The active follitropin is a heterodimer composed of an alpha chain/CGA shared with other hormones and a unique beta chain/FSHB shown here.

It is found in the secreted. Functionally, together with the alpha chain CGA constitutes follitropin, the follicle-stimulating hormone, and provides its biological specificity to the hormone heterodimer. Binds FSHR, a G protein-coupled receptor, on target cells to activate downstream signaling pathways. Follitropin is involved in follicle development and spermatogenesis in reproductive organs. In Ailuropoda melanoleuca (Giant panda), this protein is Follitropin subunit beta (FSHB).